The sequence spans 130 residues: Early E3B 14.5 kDa protein (130 aa).

The first 19 residues, 1 to 19 (MKRIVTFVLLIFCALPVLC), serve as a signal peptide directing secretion. A helical transmembrane segment spans residues 53–77 (AWLYAIISVMVFCSTIFALAIYPYL).

It belongs to the adenoviridae E3_14 family. Phosphorylated on serine; O-glycosylated, but not N-glycosylated.

It localises to the host membrane. Down-regulates the EGF receptor and prevents cytolysis by TNF. In Human adenovirus C serotype 6 (HAdV-6), this protein is Early E3B 14.5 kDa protein.